The sequence spans 857 residues: MQEQYNPQDIEQKVQQHWDNNKTFVVTEDPTKEKFYCLSMFPYPSGRLHMGHVRNYTIGDVVSRFQRLQGKNVMQPIGWDAFGLPAENAAVKNNTAPAPWTYENIEYMKNQLKLLGFGYDWNREFATCTPEYYRWEQEFFTKLYEKGLVYKKTSSVNWCPNDQTVLANEQVEDGCCWRCDTPVEQKEIPQWFIKITEYAQELLDDLDKLEGWPEMVKTMQRNWIGRSEGVELKFEVKGQQDLEVYTTRPDTLMGVTYVGIAAGHPLAKIAAENNPELAAFIEECKNTKVAEAELATMEKKGMATGLTAIHPLNGREVPVYVANFVLMDYGTGAVMAVPAHDQRDFEFATKYGLDIIPVIKPIDGSELDISEAAYTEKGVLFDSGEFDGLEFQAAFDAIAAKLEAEGKGTKTVNFRLRDWGVSRQRYWGAPIPMVTTEDGQVHPVPADQLPVILPEDVVMDGVTSPIKADKEWAKTTFNGEPALRETDTFDTFMESSWYYARYCSPQADDILDPEKANYWLPVDQYIGGIEHACMHLLYSRFFHKLLRDAGYVTSDEPFKQLLCQGMVLADAFYYTNDKGGKEWVSPTEVKVERDGKGRITSAVDNEGRNVEHSGMIKMSKSKNNGIDPQEMVDKYGADTVRLFMMFASPADMTLEWQESGVEGANRFLKRVWKLVNEHTSKGAAEAVDAAALSGDQKALRRDVHKTIAKVTDDVARRQTFNTAIAAVMELMNKLAKAPQESAQDRAILDEALKAVVAMLYPITPHICFEMWTALGQQDIDNASWPTYDEQALVEDEKLIVVQVNGKVRGKITVAADATKEQVEEIGLNEENVSKHLDGVTIRKVIYVPGKLLSIVAN.

Positions 42-52 match the 'HIGH' region motif; the sequence is PYPSGRLHMGH. The 'KMSKS' region motif lies at 617–621; it reads KMSKS. An ATP-binding site is contributed by lysine 620.

This sequence belongs to the class-I aminoacyl-tRNA synthetase family.

The protein resides in the cytoplasm. It carries out the reaction tRNA(Leu) + L-leucine + ATP = L-leucyl-tRNA(Leu) + AMP + diphosphate. This Vibrio vulnificus (strain CMCP6) protein is Leucine--tRNA ligase.